We begin with the raw amino-acid sequence, 294 residues long: Phosphate acetyltransferase (294 aa).

The protein belongs to the phosphate acetyltransferase and butyryltransferase family. As to quaternary structure, homotetramer.

It localises to the cytoplasm. The catalysed reaction is acetyl-CoA + phosphate = acetyl phosphate + CoA. The protein operates within metabolic intermediate biosynthesis; acetyl-CoA biosynthesis; acetyl-CoA from acetate: step 2/2. Functionally, in addition to acetyl-CoA (100%), the enzyme accepts propionyl-CoA (60%) and butyryl-CoA (30%). This Thermotoga maritima (strain ATCC 43589 / DSM 3109 / JCM 10099 / NBRC 100826 / MSB8) protein is Phosphate acetyltransferase (pta).